Consider the following 260-residue polypeptide: Imidazole glycerol phosphate synthase subunit HisF (260 aa).

Active-site residues include Asp11 and Asp130.

The protein belongs to the HisA/HisF family. As to quaternary structure, heterodimer of HisH and HisF.

It localises to the cytoplasm. The catalysed reaction is 5-[(5-phospho-1-deoxy-D-ribulos-1-ylimino)methylamino]-1-(5-phospho-beta-D-ribosyl)imidazole-4-carboxamide + L-glutamine = D-erythro-1-(imidazol-4-yl)glycerol 3-phosphate + 5-amino-1-(5-phospho-beta-D-ribosyl)imidazole-4-carboxamide + L-glutamate + H(+). It functions in the pathway amino-acid biosynthesis; L-histidine biosynthesis; L-histidine from 5-phospho-alpha-D-ribose 1-diphosphate: step 5/9. IGPS catalyzes the conversion of PRFAR and glutamine to IGP, AICAR and glutamate. The HisF subunit catalyzes the cyclization activity that produces IGP and AICAR from PRFAR using the ammonia provided by the HisH subunit. This chain is Imidazole glycerol phosphate synthase subunit HisF, found in Desulfatibacillum aliphaticivorans.